A 247-amino-acid chain; its full sequence is Membrane-embedded CAAX protease MroQ (247 aa).

The first 17 residues, 1 to 17 (MTRLWASLLTVIIYILS), serve as a signal peptide directing secretion. 3 helical membrane-spanning segments follow: residues 42–62 (VIYI…LINL), 81–101 (IIPW…VVSI), and 119–139 (LIII…IGPL). E141 is an active-site residue. A run of 2 helical transmembrane segments spans residues 162–182 (IVAF…AHND) and 183–203 (FKFI…YVWT).

The protein belongs to the peptidase U48 family.

It is found in the membrane. Its function is as follows. Participates in the regulation of the Agr quorum sensing activity and plays thereby an important role in virulence. Mechanistically, elicits a protease dependent control of Agr activity without playing a role in the processing of the pheromone-precursor AgrD. The protein is Membrane-embedded CAAX protease MroQ (mroQ) of Staphylococcus aureus (strain USA300).